Reading from the N-terminus, the 285-residue chain is NAD kinase (285 aa).

Catalysis depends on Asp-76, which acts as the Proton acceptor. Residues Asp-76–Gly-77, Asn-151–Glu-152, His-162, Arg-179, Asp-181, Thr-192–Ser-197, and Gln-252 each bind NAD(+).

This sequence belongs to the NAD kinase family. It depends on a divalent metal cation as a cofactor.

It localises to the cytoplasm. It catalyses the reaction NAD(+) + ATP = ADP + NADP(+) + H(+). Its function is as follows. Involved in the regulation of the intracellular balance of NAD and NADP, and is a key enzyme in the biosynthesis of NADP. Catalyzes specifically the phosphorylation on 2'-hydroxyl of the adenosine moiety of NAD to yield NADP. This chain is NAD kinase, found in Haemophilus influenzae (strain ATCC 51907 / DSM 11121 / KW20 / Rd).